A 264-amino-acid polypeptide reads, in one-letter code: Small ribosomal subunit protein uS2 (264 aa).

The disordered stretch occupies residues 225 to 264 (GKKAREERQLAAAKDAAGDAKPEAEEAPVAAEAEEAPAAE).

It belongs to the universal ribosomal protein uS2 family.

This chain is Small ribosomal subunit protein uS2, found in Corynebacterium glutamicum (strain R).